The sequence spans 892 residues: MLSARVLKNTGFLRKQCPLCKSYFWTLRRDQEYCGDQPCVPYGFIGNPPTKISIDSLTELRERFLRFFERRGHARIKRYPVVARWRDDVYLVGASIYDFQPWVTSGAVPPPANPLVISQPSIRLTDVDKVGRSGRHLTGFEMMAHHAFNYPDKFIYWIDETAEYAYEFFTKELGIPPEEITFKESIWEGGGNAGECFEVLVRGLEVATLVFMHYEVKEGKYVELPLKIVDTGYGLERIYWLIRGTPTIYDAVFGPYLDKARRSLGFPEPPSELMGKASVYFGQMDPEVIGLEKAYDIIAEKIGVDPKWLREVFKPQEALYVLADHSRTVSWMIADGVIPSNSGAGYLARLLLRRILKNLKLVGVETPLVELFDMHLKELKADYPEVWEARNLILELVDIEERKYREILKSAPGVVKKAYEEARRRGRAGFDAEDLVSLYDSFGLPPEIVAETAKSLGVEVKIPDDFYSRLAARHAKREKQPEKTLVEMAKIADLPRTRELFYEDPYMKSFKAKVLRVIDGKYVVLDQTAFYAEGGGQPADIGILKHGGGAAKVVDVQRVGHVIVHVVEGEAPPEGSEVVGEIDWDRRYALMKMHTGTHVLIQSIRRVLGPHIWQAGAQKDIPASRIDVTHFKLPTAEEVAEIERLANSVVQANMPVHVKILPRNEAEAKYGFILYQGGVVPAREIRVVQIGPDEAPYDVQACGGTHLKSTGEIGLIKIQKVERIADGVVRFIFTTGLHALKYVQEIERQVAEAASLAGGNRDNLVDSVRRLLQRAEEAERKAQRYTELYAAEFVKNLKAEPVGKYRLAVVELEDEELAKKVAQIATGRDKELVLLVVGGGRVTVYTGGADVGPIVKALREVGFRGGGSRTFAQGVYSGDVKTLIDAVKRALA.

Residues His594, His598, Cys702, and His706 each coordinate Zn(2+).

Belongs to the class-II aminoacyl-tRNA synthetase family. The cofactor is Zn(2+).

The protein localises to the cytoplasm. It catalyses the reaction tRNA(Ala) + L-alanine + ATP = L-alanyl-tRNA(Ala) + AMP + diphosphate. Functionally, catalyzes the attachment of alanine to tRNA(Ala) in a two-step reaction: alanine is first activated by ATP to form Ala-AMP and then transferred to the acceptor end of tRNA(Ala). Also edits incorrectly charged Ser-tRNA(Ala) and Gly-tRNA(Ala) via its editing domain. In Pyrobaculum aerophilum (strain ATCC 51768 / DSM 7523 / JCM 9630 / CIP 104966 / NBRC 100827 / IM2), this protein is Alanine--tRNA ligase.